A 299-amino-acid polypeptide reads, in one-letter code: uncharacterized protein (299 aa).

Catalysis depends on charge relay system residues threonine 47 and tyrosine 109. The Proton donor role is filled by tyrosine 138. Lysine 168 acts as the Schiff-base intermediate with substrate in catalysis.

Belongs to the DapA family. As to quaternary structure, homotetramer.

It localises to the cytoplasm. This is an uncharacterized protein from Chloroflexus aurantiacus (strain ATCC 29366 / DSM 635 / J-10-fl).